The primary structure comprises 420 residues: rRNA methyltransferase 3, mitochondrial (420 aa).

Residues 1–40 (MAALVRPARFVVRPLLQVVQAWDLDARRWVRALRRSPVKV) constitute a mitochondrion transit peptide. The tract at residues 49-88 (EQKRAPGKQPRKAPSEASAQEQREKQPLEESASRAPSTWE) is disordered. Positions 69–80 (EQREKQPLEESA) are enriched in basic and acidic residues. Residues G356, I380, and L389 each contribute to the S-adenosyl-L-methionine site.

It belongs to the class IV-like SAM-binding methyltransferase superfamily. RNA methyltransferase TrmH family. Expressed at same level in normal liver and hepatocarcinoma.

It localises to the mitochondrion. It carries out the reaction guanosine(1370) in 16S rRNA + S-adenosyl-L-methionine = 2'-O-methylguanosine(1370) in 16S rRNA + S-adenosyl-L-homocysteine + H(+). Functionally, S-adenosyl-L-methionine-dependent 2'-O-ribose methyltransferase that catalyzes the formation of 2'-O-methylguanosine at position 1370 (Gm1370) in the 16S mitochondrial large subunit ribosomal RNA (mtLSU rRNA), a conserved modification in the peptidyl transferase domain of the mtLSU rRNA. Also required for formation of 2'-O-methyluridine at position 1369 (Um1369) mediated by MRM2. This is rRNA methyltransferase 3, mitochondrial from Homo sapiens (Human).